The chain runs to 198 residues: Endonuclease V (198 aa).

Asp38 and Asp101 together coordinate Mg(2+).

The protein belongs to the endonuclease V family. The cofactor is Mg(2+).

The protein localises to the cytoplasm. It catalyses the reaction Endonucleolytic cleavage at apurinic or apyrimidinic sites to products with a 5'-phosphate.. Its function is as follows. DNA repair enzyme involved in the repair of deaminated bases. Selectively cleaves double-stranded DNA at the second phosphodiester bond 3' to a deoxyinosine leaving behind the intact lesion on the nicked DNA. The protein is Endonuclease V of Saccharolobus islandicus (strain M.14.25 / Kamchatka #1) (Sulfolobus islandicus).